The chain runs to 668 residues: Lebercilin-like protein (668 aa).

Positions 17 to 44 are disordered; sequence SVALENNRRSAECKRSPGTGDFSRNSSA. Over residues 22 to 31 the composition is skewed to basic and acidic residues; the sequence is NNRRSAECKR. 2 coiled-coil regions span residues 148-259 and 305-336; these read LHKI…EREE and AAQT…IKNI. Residues 351 to 402 form a disordered region; the sequence is YPKVSSTKSVQADRKSLPFTSMRHQGTQKSDVPPLTTKGKKATGNMNHKEKS. Over residues 368-380 the composition is skewed to polar residues; the sequence is PFTSMRHQGTQKS. Residues 420–440 adopt a coiled-coil conformation; the sequence is EDSKTKYEDLSREEKHLEVQV. Disordered stretches follow at residues 495 to 520, 533 to 581, and 605 to 668; these read RSMQ…PLRQ, LHHG…FGKS, and SGYV…KIII. Positions 546-558 are enriched in polar residues; that stretch reads AGNTKYSHSTSKH. Composition is skewed to basic and acidic residues over residues 560 to 572 and 621 to 632; these read SNRE…HSDS and GSEEPLQSKESH. A compositionally biased stretch (polar residues) spans 633-660; sequence PPSQASASNAFGDSKVTVVNSIKPSSPT.

This sequence belongs to the LCA5 family.

This chain is Lebercilin-like protein, found in Macaca fascicularis (Crab-eating macaque).